A 212-amino-acid polypeptide reads, in one-letter code: Peptide methionine sulfoxide reductase MsrA (212 aa).

Cys52 is an active-site residue.

The protein belongs to the MsrA Met sulfoxide reductase family.

The catalysed reaction is L-methionyl-[protein] + [thioredoxin]-disulfide + H2O = L-methionyl-(S)-S-oxide-[protein] + [thioredoxin]-dithiol. It carries out the reaction [thioredoxin]-disulfide + L-methionine + H2O = L-methionine (S)-S-oxide + [thioredoxin]-dithiol. Its function is as follows. Has an important function as a repair enzyme for proteins that have been inactivated by oxidation. Catalyzes the reversible oxidation-reduction of methionine sulfoxide in proteins to methionine. In Escherichia coli O6:K15:H31 (strain 536 / UPEC), this protein is Peptide methionine sulfoxide reductase MsrA.